An 88-amino-acid polypeptide reads, in one-letter code: Putative membrane protein insertion efficiency factor (88 aa).

Belongs to the UPF0161 family.

The protein resides in the cell inner membrane. Functionally, could be involved in insertion of integral membrane proteins into the membrane. The sequence is that of Putative membrane protein insertion efficiency factor from Rickettsia canadensis (strain McKiel).